The sequence spans 833 residues: MSFYNHKEIEPKWQGYWAEHHTFKTGTDASKPKFYALDMFPYPSGAGLHVGHPEGYTATDILSRYKRAQGYNVLHPMGWDAFGLPAEQYAMDTGNDPAEFTAENIANFKRQINALGFSYDWDREVNTTDPNYYKWTQWIFTKLYEKGLAYEAEVPVNWVEELGTAIANEEVLPDGTSERGGYPVVRKPMRQWMLKITAYAERLLNDLDELDWSESIKDMQRNWIGKSTGANVTFKVKGTDKEFTVFTTRPDTLFGATFTVLAPEHELVDAITSTEQAEAVADYKHQASLKSDLARTDLAKEKTGVWTGAYAINPVNGKEIPIWIADYVLASYGTGAVMAVPAHDQRDWEFAKQFDLPIVEVLEGGNVEEAAYTEDGLHVNSDFLDGLNKEDAIAKIVACLEEKGCGQEKVTYRLRDWLFSRQRYWGEPIPIIHWEDGTSTAVPESELPLVLPVTKDIRPSGTGESPLANLTDWLEVTREDGVKGRRETNTMPQWAGSSWYYLRYIDPHNTEKLADEDLLKQWLPVDIYVGGAEHAVLHLLYARFWHKFLYDLGVVPTKEPFQKLFNQGMILGTSYRDHRGALVATDKVEKRDGSFFHVETGEELEQAPAKMSKSLKNVVNPDDVVEQYGADTLRVYEMFMGPLDASIAWSEEGLEGSRKFLDRVYRLIRSKEIVAENNGALDKVYNETVKAVTEQIDSLKFNTAIAQLMVFVNAANKEDKLYVDYAKGFIQLIAPFAPHLAEELWQTVAATGESISYVTWPTWDESKLVEDEIEIVVQIKGKVRAKLMVAKDLSREELQEIALADEKVKAEIDGKEIVKVISVPNKLVNIVVK.

The 'HIGH' region motif lies at 41 to 52 (PYPSGAGLHVGH). Positions 610-614 (KMSKS) match the 'KMSKS' region motif. Lysine 613 contacts ATP.

This sequence belongs to the class-I aminoacyl-tRNA synthetase family.

It localises to the cytoplasm. The enzyme catalyses tRNA(Leu) + L-leucine + ATP = L-leucyl-tRNA(Leu) + AMP + diphosphate. The protein is Leucine--tRNA ligase of Streptococcus pneumoniae (strain 70585).